The chain runs to 449 residues: Clusterin (449 aa).

The N-terminal stretch at 1 to 21 (MKTLLLLVGLLLTLENGQVLG) is a signal peptide. Residues 77 to 80 (KKKK) carry the Nuclear localization signal motif. 2 N-linked (GlcNAc...) asparagine glycosylation sites follow: N85 and N102. 5 disulfide bridges follow: C101-C313, C112-C305, C115-C302, C120-C295, and C128-C285. S132 bears the Phosphoserine mark. N144, N291, N328, N354, and N374 each carry an N-linked (GlcNAc...) asparagine glycan. Residue S396 is modified to Phosphoserine. The Nuclear localization signal signature appears at 443–447 (RQKNR).

It belongs to the clusterin family. In terms of assembly, antiparallel disulfide-linked heterodimer of an alpha chain and a beta chain. Self-associates and forms higher oligomers. Interacts with a broad range of misfolded proteins, including APP, APOC2 and LYZ. Slightly acidic pH promotes interaction with misfolded proteins. Forms high-molecular weight oligomers upon interaction with misfolded proteins. Interacts with APOA1, LRP2, CLUAP1 and PON1. Interacts with the complement membrane attack complex. Interacts (via alpha chain) with XRCC6. Interacts with SYVN1, COMMD1, BTRC, CUL1 and with ubiquitin and SCF (SKP1-CUL1-F-box protein) E3 ubiquitin-protein ligase complexes. Interacts (via alpha chain) with BAX in stressed cells, where BAX undergoes a conformation change leading to association with the mitochondrial membrane. Does not interact with BAX in unstressed cells. Found in a complex with LTF, CLU, EPPIN and SEMG1. Interacts (immaturely glycosylated pre-secreted form) with HSPA5; this interaction promotes CLU stability and facilitates stress-induced CLU retrotranslocation from the secretory pathway to the mitochondria, thereby reducing stress-induced apoptosis by stabilizing mitochondrial membrane integrity. Interacts with BCL2L1; this interaction releases and activates BAX and promotes cell death. Interacts with TGFBR2 and ACVR1. Interacts (secreted form) with STMN3; this interaction may act as an important modulator during neuronal differentiation. Interacts with VLDLR and LRP8. Post-translationally, proteolytically cleaved on its way through the secretory system, probably within the Golgi lumen. Proteolytic cleavage is not necessary for its chaperone activity. All non-secreted forms are not proteolytically cleaved. Chaperone activity of uncleaved forms is dependent on a non-reducing environment. In terms of processing, polyubiquitinated, leading to proteasomal degradation. Under cellular stress, the intracellular level of cleaved form is reduced due to proteasomal degradation. Heavily N-glycosylated. About 30% of the protein mass is comprised of complex N-linked carbohydrate. Endoplasmic reticulum (ER) stress induces changes in glycosylation status and increases level of hypoglycosylated forms. Core carbohydrates are essential for chaperone activity. Non-secreted forms are hypoglycosylated or unglycosylated.

The protein localises to the secreted. Its subcellular location is the nucleus. It localises to the cytoplasm. The protein resides in the mitochondrion membrane. It is found in the cytosol. The protein localises to the microsome. Its subcellular location is the endoplasmic reticulum. It localises to the mitochondrion. The protein resides in the perinuclear region. It is found in the cytoplasmic vesicle. The protein localises to the secretory vesicle. Its subcellular location is the chromaffin granule. Its function is as follows. Functions as extracellular chaperone that prevents aggregation of non native proteins. Prevents stress-induced aggregation of blood plasma proteins. Inhibits formation of amyloid fibrils by APP, APOC2, B2M, CALCA, CSN3, SNCA and aggregation-prone LYZ variants (in vitro). Does not require ATP. Maintains partially unfolded proteins in a state appropriate for subsequent refolding by other chaperones, such as HSPA8/HSC70. Does not refold proteins by itself. Binding to cell surface receptors triggers internalization of the chaperone-client complex and subsequent lysosomal or proteasomal degradation. When secreted, protects cells against apoptosis and against cytolysis by complement: inhibits assembly of the complement membrane attack complex (MAC) by preventing polymerization of C9 pore component of the MAC complex. Intracellular forms interact with ubiquitin and SCF (SKP1-CUL1-F-box protein) E3 ubiquitin-protein ligase complexes and promote the ubiquitination and subsequent proteasomal degradation of target proteins. Promotes proteasomal degradation of COMMD1 and IKBKB. Modulates NF-kappa-B transcriptional activity. Following stress, promotes apoptosis. Inhibits apoptosis when associated with the mitochondrial membrane by interference with BAX-dependent release of cytochrome c into the cytoplasm. Plays a role in the regulation of cell proliferation. An intracellular form suppresses stress-induced apoptosis by stabilizing mitochondrial membrane integrity through interaction with HSPA5. Secreted form does not affect caspase or BAX-mediated intrinsic apoptosis and TNF-induced NF-kappa-B-activity. Secreted form act as an important modulator during neuronal differentiation through interaction with STMN3. Plays a role in the clearance of immune complexes that arise during cell injury. The protein is Clusterin (CLU) of Equus caballus (Horse).